Reading from the N-terminus, the 216-residue chain is Serine acetyltransferase (216 aa).

It belongs to the transferase hexapeptide repeat family.

Its subcellular location is the cytoplasm. It carries out the reaction L-serine + acetyl-CoA = O-acetyl-L-serine + CoA. The protein operates within amino-acid biosynthesis; L-cysteine biosynthesis; L-cysteine from L-serine: step 1/2. With respect to regulation, inhibited by cysteine. Its function is as follows. Catalyzes the acetylation of serine by acetyl-CoA to produce O-acetylserine (OAS). In Bacillus licheniformis (strain ATCC 14580 / DSM 13 / JCM 2505 / CCUG 7422 / NBRC 12200 / NCIMB 9375 / NCTC 10341 / NRRL NRS-1264 / Gibson 46), this protein is Serine acetyltransferase.